The chain runs to 375 residues: Succinyl-diaminopimelate desuccinylase (375 aa).

H66 provides a ligand contact to Zn(2+). Residue D68 is part of the active site. D99 is a Zn(2+) binding site. Residue E133 is the Proton acceptor of the active site. E134, E162, and H348 together coordinate Zn(2+).

It belongs to the peptidase M20A family. DapE subfamily. Homodimer. The cofactor is Zn(2+). Co(2+) serves as cofactor.

The catalysed reaction is N-succinyl-(2S,6S)-2,6-diaminopimelate + H2O = (2S,6S)-2,6-diaminopimelate + succinate. The protein operates within amino-acid biosynthesis; L-lysine biosynthesis via DAP pathway; LL-2,6-diaminopimelate from (S)-tetrahydrodipicolinate (succinylase route): step 3/3. Its function is as follows. Catalyzes the hydrolysis of N-succinyl-L,L-diaminopimelic acid (SDAP), forming succinate and LL-2,6-diaminopimelate (DAP), an intermediate involved in the bacterial biosynthesis of lysine and meso-diaminopimelic acid, an essential component of bacterial cell walls. The chain is Succinyl-diaminopimelate desuccinylase from Alkalilimnicola ehrlichii (strain ATCC BAA-1101 / DSM 17681 / MLHE-1).